A 534-amino-acid chain; its full sequence is Lariat debranching enzyme A (534 aa).

Residues Cys-8, His-10, Asp-39, and Asn-84 each coordinate a divalent metal cation. The lariat recognition loop stretch occupies residues 124–154; that stretch reads SGIFKSHDYRKGHFERPPYSKDTVRSAYHVR. Residues His-174, His-226, and His-228 each coordinate a divalent metal cation. Disordered regions lie at residues 386 to 439 and 469 to 534; these read EEEK…QEDE and SMAV…DEDE. Acidic residues predominate over residues 388-400; it reads EKEDFDMTEDNEA. Residues 413–424 are compositionally biased toward polar residues; sequence STDTSILSTSVN. Positions 428–439 are enriched in acidic residues; the sequence is ITLEDDDEQEDE. A compositionally biased stretch (basic and acidic residues) spans 484-499; it reads ELDRSESSQTEGEGKQ.

Belongs to the lariat debranching enzyme family. Requires Fe(2+) as cofactor. Zn(2+) serves as cofactor. Mn(2+) is required as a cofactor.

The protein resides in the nucleus. With respect to regulation, active in presence of diverse metals including Fe(2+), Zn(2+), Mn(2+). Also activated by Ca(2+). Binds two metal cations in two adjacent alpha and beta metal-binding pockets. Its function is as follows. Cleaves the 2'-5' phosphodiester linkage at the branch point of excised lariat intron RNA and converts them into linear molecules that can be subsequently degraded, thereby facilitating ribonucleotide turnover. Linked to its role in pre-mRNA processing mechanism, may also participate in retrovirus replication and have an antiviral cell-intrinsic defense function. In Xenopus laevis (African clawed frog), this protein is Lariat debranching enzyme A (dbr1-a).